The sequence spans 125 residues: Type II secretion system protein I (125 aa).

Residues Met-1 to Gly-5 constitute a propeptide, leader sequence. Met-6 bears the N-methylmethionine mark. Residues Met-6–Leu-26 traverse the membrane as a helical segment.

The protein belongs to the GSP I family. Type II secretion is composed of four main components: the outer membrane complex, the inner membrane complex, the cytoplasmic secretion ATPase and the periplasm-spanning pseudopilus. Interacts with core component OutG. In terms of processing, cleaved by prepilin peptidase. Methylated by prepilin peptidase at the amino group of the N-terminal methionine once the leader sequence is cleaved by prepilin peptidase.

It localises to the cell inner membrane. Functionally, component of the type II secretion system required for the energy-dependent secretion of extracellular factors such as proteases and toxins from the periplasm. Part of the pseudopilus tip complex that is critical for the recognition and binding of secretion substrates. In Dickeya chrysanthemi (Pectobacterium chrysanthemi), this protein is Type II secretion system protein I (outI).